A 185-amino-acid chain; its full sequence is Inner membrane lipoprotein DcrB (185 aa).

Residues 1–19 (MRNLVKYVGIGLLVMGLAA) form the signal peptide. A lipid anchor (N-palmitoyl cysteine) is attached at Cys-20. A lipid anchor (S-diacylglycerol cysteine) is attached at Cys-20.

Belongs to the DcrB family.

The protein resides in the cell membrane. Plays a role in cell envelope biogenesis, maintenance of cell envelope integrity and membrane homeostasis. Essential for lipoprotein maturation under conditions where membrane fluidity may be altered. This chain is Inner membrane lipoprotein DcrB, found in Shigella flexneri.